A 491-amino-acid polypeptide reads, in one-letter code: Ketol-acid reductoisomerase (NADP(+)) (491 aa).

In terms of domain architecture, KARI N-terminal Rossmann spans 17-208 (LGKCRFMSRD…GGHRAGVLES (192 aa)). NADP(+) is bound by residues 45 to 48 (CGAQ), arginine 68, arginine 76, serine 78, and 108 to 110 (DKQ). The active site involves histidine 132. Glycine 158 lines the NADP(+) pocket. KARI C-terminal knotted domains follow at residues 209–344 (SFVA…NYPE) and 345–484 (YEGK…MTDM). The Mg(2+) site is built by aspartate 217, glutamate 221, glutamate 389, and glutamate 393. Serine 414 serves as a coordination point for substrate.

Belongs to the ketol-acid reductoisomerase family. Requires Mg(2+) as cofactor.

It carries out the reaction (2R)-2,3-dihydroxy-3-methylbutanoate + NADP(+) = (2S)-2-acetolactate + NADPH + H(+). It catalyses the reaction (2R,3R)-2,3-dihydroxy-3-methylpentanoate + NADP(+) = (S)-2-ethyl-2-hydroxy-3-oxobutanoate + NADPH + H(+). The protein operates within amino-acid biosynthesis; L-isoleucine biosynthesis; L-isoleucine from 2-oxobutanoate: step 2/4. It functions in the pathway amino-acid biosynthesis; L-valine biosynthesis; L-valine from pyruvate: step 2/4. Functionally, involved in the biosynthesis of branched-chain amino acids (BCAA). Catalyzes an alkyl-migration followed by a ketol-acid reduction of (S)-2-acetolactate (S2AL) to yield (R)-2,3-dihydroxy-isovalerate. In the isomerase reaction, S2AL is rearranged via a Mg-dependent methyl migration to produce 3-hydroxy-3-methyl-2-ketobutyrate (HMKB). In the reductase reaction, this 2-ketoacid undergoes a metal-dependent reduction by NADPH to yield (R)-2,3-dihydroxy-isovalerate. The polypeptide is Ketol-acid reductoisomerase (NADP(+)) (Proteus mirabilis (strain HI4320)).